Here is a 571-residue protein sequence, read N- to C-terminus: Fumarate reductase (cytochrome) (571 aa).

20 residues coordinate heme c: H8, C14, C17, H18, C36, C39, H40, H52, H58, H61, C68, C71, H72, A74, H75, C82, C85, H86, N91, and Y94. The segment at 118 to 571 is flavoprotein-like; it reads ALASAPHDTV…EEAAKYSKKN (454 aa). FAD contacts are provided by A137, E156, N164, A165, A169, G170, G171, G278, and Q338. G170 serves as a coordination point for succinate. Succinate contacts are provided by H365, T377, and E378. Fumarate-binding residues include T377, E378, and R402. Catalysis depends on R402, which acts as the Proton donor. Residue K431 participates in heme c binding. H504 is a binding site for succinate. H504 is a fumarate binding site. Residues H505 and E534 each contribute to the FAD site. Succinate contacts are provided by R544 and G547. Fumarate-binding residues include R544 and G547. Positions 549 and 550 each coordinate FAD.

Monomer. FAD serves as cofactor. Requires heme c as cofactor.

It localises to the periplasm. The enzyme catalyses 2 Fe(III)-[cytochrome c] + succinate = fumarate + 2 Fe(II)-[cytochrome c] + 2 H(+). Functionally, flavocytochrome that catalyzes the reduction of fumarate to succinate. Is essential for fumarate respiration during anaerobic growth, acting as the terminal reductase. Receives electrons from the membrane-bound tetraheme c-type cytochrome CymA. In vitro, can use the artificial electron donor methyl viologen. The sequence is that of Fumarate reductase (cytochrome) (fccA) from Shewanella frigidimarina.